We begin with the raw amino-acid sequence, 300 residues long: DDRGK domain-containing protein 1 (300 aa).

Residues 1-2 (MD) lie on the Lumenal side of the membrane. A helical membrane pass occupies residues 3–23 (VVLYIAAAAILLVLIVFSVKI). Topologically, residues 24–300 (RGRTQDADVE…NLTPDIHSSA (277 aa)) are cytoplasmic. Positions 28–173 (QDADVEDHQN…RVKEEQERRE (146 aa)) are disordered. The span at 78–90 (NEDSPVEADEDEE) shows a compositional bias: acidic residues. Residues 112–173 (KLEEKQARKA…RVKEEQERRE (62 aa)) show a composition bias toward basic and acidic residues. The UFM1-interacting motif (UFIM) motif lies at 183–197 (SFIIEDQGEAEELTE). Residues 217–261 (VLLEDLASQFGLRTQDAIARLQDLIADGSLTGVIDDRGKFIFITP) form the PCI domain.

The protein belongs to the DDRGK1 family. Component of the UFM1 ribosome E3 ligase (UREL) complex, composed of ufl1, ddrgk1 and cdk5rap3.

It localises to the endoplasmic reticulum membrane. Functionally, component of the UFM1 ribosome E3 ligase (UREL) complex, a multiprotein complex that catalyzes ufmylation of endoplasmic reticulum-docked proteins. The UREL complex plays a key role in ribosome recycling by mediating mono-ufmylation of the RPL26/uL24 subunit of the 60S ribosome following ribosome dissociation: ufmylation weakens the junction between post-termination 60S subunits and SEC61 translocons, promoting release and recycling of the large ribosomal subunit from the endoplasmic reticulum membrane. Ufmylation of RPL26/uL24 and subsequent 60S ribosome recycling either take place after normal termination of translation or after ribosome stalling during cotranslational translocation at the endoplasmic reticulum. Within the UREL complex, DDRGK1 tethers the complex to the endoplasmic reticulum membrane to restrict its activity to endoplasmic reticulum-docked ribosomes and acts as an ufmylation 'reader': following RPL26/uL24 ufmylation, DDRGK1 specifically binds to ufmylated RPL26/uL24 via its UFIM motif, resulting in stable association between the 60S ribosome and the UREL complex, followed by dissociation of the 60S ribosome subunit from the endoplasmic reticulum membrane. The UREL complex is also involved in reticulophagy in response to endoplasmic reticulum stress by promoting ufmylation of proteins such as CYB5R3 and RPN1, thereby promoting lysosomal degradation of ufmylated proteins. Plays a role in cartilage development through sox9, inhibiting the ubiquitin-mediated proteasomal degradation of this transcriptional regulator. Required for stabilization and ufmylation of ATG9A. The polypeptide is DDRGK domain-containing protein 1 (Danio rerio (Zebrafish)).